The following is a 207-amino-acid chain: Serotonin N-acetyltransferase (207 aa).

A disordered region spans residues 1-29; it reads MSTPSVHCLKPSPLHLPSGIPGSPGRQRR. The segment at 28-35 is YWHAZ-binding; the sequence is RRHTLPAN. T31 is subject to Phosphothreonine; by PKA. The N-acetyltransferase domain occupies 35–196; the sequence is NEFRCLTPED…TFTEMHCSLR (162 aa). L124 contacts substrate. Acetyl-CoA-binding positions include 124–126 and 132–137; these read LAV and QQGKGS. M159 is a substrate binding site. 168-170 serves as a coordination point for acetyl-CoA; sequence YQR. At S205 the chain carries Phosphoserine; by PKA.

It belongs to the acetyltransferase family. AANAT subfamily. In terms of assembly, monomer. Interacts with several 14-3-3 proteins, including YWHAB, YWHAE, YWHAG and YWHAZ, preferentially when phosphorylated at Thr-31. Phosphorylation on Ser-205 also allows binding to YWHAZ, but with a 10-fold lower affinity. The interaction with YWHAZ considerably increases affinity for arylalkylamines and acetyl-CoA and protects the enzyme from dephosphorylation and proteasomal degradation. It may also prevent thiol-dependent inactivation. The physiological stoichiometry of the interaction is not clear. In vitro studies show either 1:2 (i.e. 1 AANAT molecule per YWHAZ dimer) or 2:2. CAMP-dependent phosphorylation on both N-terminal Thr-31 and C-terminal Ser-205 regulates AANAT activity by promoting interaction with 14-3-3 proteins. As to expression, highest expression in the pineal gland, followed by retina. Expressed at much lower levels in brainstem and pituitary gland. AANAT activity also detected at low levels in the olfactory lobe.

The protein resides in the cytoplasm. It carries out the reaction a 2-arylethylamine + acetyl-CoA = an N-acetyl-2-arylethylamine + CoA + H(+). It functions in the pathway aromatic compound metabolism; melatonin biosynthesis; melatonin from serotonin: step 1/2. Functionally, controls the night/day rhythm of melatonin production in the pineal gland. Catalyzes the N-acetylation of serotonin into N-acetylserotonin, the penultimate step in the synthesis of melatonin. This is Serotonin N-acetyltransferase (AANAT) from Ovis aries (Sheep).